The following is a 153-amino-acid chain: 6,7-dimethyl-8-ribityllumazine synthase (153 aa).

Residues F22, 56–58 (AFE), and 80–82 (AVI) contribute to the 5-amino-6-(D-ribitylamino)uracil site. 85–86 (AT) is a binding site for (2S)-2-hydroxy-3-oxobutyl phosphate. The active-site Proton donor is H88. Residue F113 coordinates 5-amino-6-(D-ribitylamino)uracil. (2S)-2-hydroxy-3-oxobutyl phosphate is bound at residue R127.

Belongs to the DMRL synthase family.

The enzyme catalyses (2S)-2-hydroxy-3-oxobutyl phosphate + 5-amino-6-(D-ribitylamino)uracil = 6,7-dimethyl-8-(1-D-ribityl)lumazine + phosphate + 2 H2O + H(+). It participates in cofactor biosynthesis; riboflavin biosynthesis; riboflavin from 2-hydroxy-3-oxobutyl phosphate and 5-amino-6-(D-ribitylamino)uracil: step 1/2. Catalyzes the formation of 6,7-dimethyl-8-ribityllumazine by condensation of 5-amino-6-(D-ribitylamino)uracil with 3,4-dihydroxy-2-butanone 4-phosphate. This is the penultimate step in the biosynthesis of riboflavin. This Alkaliphilus metalliredigens (strain QYMF) protein is 6,7-dimethyl-8-ribityllumazine synthase.